Consider the following 313-residue polypeptide: Ribosomal protein uL3 glutamine methyltransferase (313 aa).

The protein belongs to the protein N5-glutamine methyltransferase family. PrmB subfamily.

The enzyme catalyses L-glutaminyl-[ribosomal protein uL3] + S-adenosyl-L-methionine = N(5)-methyl-L-glutaminyl-[ribosomal protein uL3] + S-adenosyl-L-homocysteine + H(+). Its function is as follows. Methylates large ribosomal subunit protein uL3 on a specific glutamine residue. The protein is Ribosomal protein uL3 glutamine methyltransferase of Pasteurella multocida (strain Pm70).